We begin with the raw amino-acid sequence, 464 residues long: E3 ubiquitin-protein ligase MYLIP-B (464 aa).

The FERM domain occupies 1–279 (MLCHITRPDS…EIHAFYRCDT (279 aa)). Residues 381-416 (CALCCEQEISAAFCPCGHMFCCYNCASQLQCCPVCR) form an RING-type zinc finger.

In terms of assembly, interacts with anxa5.

It localises to the cytoplasm. Its subcellular location is the cytosol. The catalysed reaction is S-ubiquitinyl-[E2 ubiquitin-conjugating enzyme]-L-cysteine + [acceptor protein]-L-lysine = [E2 ubiquitin-conjugating enzyme]-L-cysteine + N(6)-ubiquitinyl-[acceptor protein]-L-lysine.. It participates in protein modification; protein ubiquitination. In terms of biological role, E3 ubiquitin-protein ligase that mediates ubiquitination and subsequent proteasomal degradation of myosin regulatory light chain (MRLC). Regulates cell movements during gastrulation by acting downstream of fz7 to antagonize the frizzled-signaling pathway. This Danio rerio (Zebrafish) protein is E3 ubiquitin-protein ligase MYLIP-B.